The following is a 263-amino-acid chain: Pyrrolysine synthase (263 aa).

L-pyrrolysine contacts are provided by Leu8, Val57, Ile64, and Ala107. 7 residues coordinate NAD(+): Lys155, Val156, Asp175, Cys210, Pro228, Ile230, and Glu249.

This sequence belongs to the PylD family.

It catalyses the reaction (3R)-3-methyl-D-ornithyl-N(6)-L-lysine + NAD(+) = L-pyrrolysine + NH4(+) + NADH + 2 H(+). The protein operates within amino-acid biosynthesis; L-pyrrolysine biosynthesis. Its function is as follows. Catalyzes the ultimate step of the pyrrolysine biosynthesis pathway by converting the isopeptide (3R)-3-methyl-D-ornithyl-N(6)-L-lysine to the 22nd proteinogenic amino acid. Is able to use surrogate substrates such as (3R)-D-ornithyl-N(6)-L-lysine in vitro. This is Pyrrolysine synthase from Methanosarcina barkeri (strain Fusaro / DSM 804).